The chain runs to 264 residues: NAD-capped RNA hydrolase NudC (264 aa).

Positions 99 and 102 each coordinate Zn(2+). Glutamate 112 is a substrate binding site. Zn(2+) is bound by residues cysteine 117 and cysteine 120. Tyrosine 125 is a substrate binding site. Residues 126 to 253 form the Nudix hydrolase domain; it reads PVICPSIIVA…TIARKLIHAT (128 aa). A divalent metal cation contacts are provided by alanine 162, glutamate 178, and glutamate 182. The Nudix box motif lies at 163 to 184; that stretch reads GFVEVGETFEQAVQREVFEETG. Residue 196–203 coordinates substrate; that stretch reads QPWAFPNS. Glutamate 223 provides a ligand contact to a divalent metal cation. Residue alanine 246 participates in substrate binding.

This sequence belongs to the Nudix hydrolase family. NudC subfamily. In terms of assembly, homodimer. It depends on Mg(2+) as a cofactor. The cofactor is Mn(2+). Requires Zn(2+) as cofactor.

The catalysed reaction is a 5'-end NAD(+)-phospho-ribonucleoside in mRNA + H2O = a 5'-end phospho-adenosine-phospho-ribonucleoside in mRNA + beta-nicotinamide D-ribonucleotide + 2 H(+). It catalyses the reaction NAD(+) + H2O = beta-nicotinamide D-ribonucleotide + AMP + 2 H(+). The enzyme catalyses NADH + H2O = reduced beta-nicotinamide D-ribonucleotide + AMP + 2 H(+). MRNA decapping enzyme that specifically removes the nicotinamide adenine dinucleotide (NAD) cap from a subset of mRNAs by hydrolyzing the diphosphate linkage to produce nicotinamide mononucleotide (NMN) and 5' monophosphate mRNA. The NAD-cap is present at the 5'-end of some mRNAs and stabilizes RNA against 5'-processing. Has preference for mRNAs with a 5'-end purine. Catalyzes the hydrolysis of a broad range of dinucleotide pyrophosphates. The polypeptide is NAD-capped RNA hydrolase NudC (Haemophilus influenzae (strain PittGG)).